Here is a 171-residue protein sequence, read N- to C-terminus: Large ribosomal subunit protein bL21 (171 aa).

Positions 144–171 are disordered; sequence AAPAKAEAAPKKKAAPKKAAAKTEEGEA. Residues 154 to 163 show a composition bias toward basic residues; that stretch reads KKKAAPKKAA.

This sequence belongs to the bacterial ribosomal protein bL21 family. Part of the 50S ribosomal subunit. Contacts protein L20.

In terms of biological role, this protein binds to 23S rRNA in the presence of protein L20. This Caulobacter vibrioides (strain ATCC 19089 / CIP 103742 / CB 15) (Caulobacter crescentus) protein is Large ribosomal subunit protein bL21.